A 129-amino-acid polypeptide reads, in one-letter code: MRALALDIGLKRIGVALCVDKKIALPLDAVLRKNRNQAANEIKNLLKIHEISLLIVGIPKGGSSEEEMTRRIKHFVSLLEFDKEICFVDESGTSKKALEYGIANTRKKDGKLDSLAAFIMIKDYFCSLE.

It belongs to the YqgF nuclease family.

The protein resides in the cytoplasm. Could be a nuclease involved in processing of the 5'-end of pre-16S rRNA. The chain is Putative pre-16S rRNA nuclease from Campylobacter jejuni subsp. doylei (strain ATCC BAA-1458 / RM4099 / 269.97).